We begin with the raw amino-acid sequence, 273 residues long: Petrobactin import ATP-binding protein FpuD (273 aa).

The region spanning 5 to 241 (LETKRLTLSY…KLVRDVFRME (237 aa)) is the ABC transporter domain. ATP is bound at residue 37–44 (GSNGCGKS).

This sequence belongs to the ABC transporter superfamily. As to quaternary structure, the complex is composed of two ATP-binding proteins (FpuD), two transmembrane proteins (FpuB) and a solute-binding protein (FpuA).

It is found in the cell membrane. The enzyme catalyses a Fe(III)-siderophore(out) + ATP + H2O = a Fe(III)-siderophore(in) + ADP + phosphate + H(+). Its function is as follows. Part of an ABC transporter complex involved in ferric-petrobactin uptake. Probably responsible for energy coupling to the transport system. In Bacillus anthracis, this protein is Petrobactin import ATP-binding protein FpuD.